Consider the following 122-residue polypeptide: Phycocyanin PC645 alpha-2 subunit (122 aa).

The (2R,3E)-phycocyanobilin site is built by D54 and R68. Mesobiliverdin-binding residues include C70, K76, E77, and C92.

It belongs to the phycoerythrin family. In terms of assembly, heterotetramer of 2 different alpha chains and 2 identical beta chains which form 2 alpha-beta heterodimers within the heterotetramer. Post-translationally, contains two phycocyanobilin chromophores and one mesobiliverdin chromophore with binding mediated by both the alpha and beta subunits.

The protein resides in the plastid. Its subcellular location is the chloroplast thylakoid membrane. In terms of biological role, light-harvesting photosynthetic tetrapyrrole chromophore-protein from the phycobiliprotein complex. This is Phycocyanin PC645 alpha-2 subunit from Chroomonas sp. (strain CCMP270).